The sequence spans 628 residues: DNA ligase (628 aa).

NAD(+) contacts are provided by residues 36 to 40 (DVEYD), 85 to 86 (SL), and E117. The active-site N6-AMP-lysine intermediate is K119. 4 residues coordinate NAD(+): R140, E174, K309, and K333. 4 residues coordinate Zn(2+): C427, C430, C446, and C452.

It belongs to the NAD-dependent DNA ligase family. LigA subfamily. Mg(2+) serves as cofactor. It depends on Mn(2+) as a cofactor.

It carries out the reaction NAD(+) + (deoxyribonucleotide)n-3'-hydroxyl + 5'-phospho-(deoxyribonucleotide)m = (deoxyribonucleotide)n+m + AMP + beta-nicotinamide D-nucleotide.. DNA ligase that catalyzes the formation of phosphodiester linkages between 5'-phosphoryl and 3'-hydroxyl groups in double-stranded DNA using NAD as a coenzyme and as the energy source for the reaction. It is essential for DNA replication and repair of damaged DNA. In Tropheryma whipplei (strain TW08/27) (Whipple's bacillus), this protein is DNA ligase.